Consider the following 260-residue polypeptide: Caveolae-associated protein 3 (260 aa).

Positions 1-84 (MGESALESGP…SNTLAQLLAK (84 aa)) are interaction with CAVIN1. Residues 20–78 (VHAVTVVTLLEKLATMLETLRERQGGLAQRQGGLAGSVRRIQSNLGALSRSHDTTSNTL) form a leucine-zipper region. A phosphoserine mark is found at Ser-62 and Ser-70. A Glycyl lysine isopeptide (Lys-Gly) (interchain with G-Cter in SUMO2) cross-link involves residue Lys-128. The interaction with CAV1 stretch occupies residues 135–201 (AKAFQKAPEP…SGRKGHAAPT (67 aa)). Residues 140-260 (KAPEPLGPVE…AAVLQVESAA (121 aa)) form a disordered region. Residues 157–168 (AEAEESSDEEEP) show a composition bias toward acidic residues. Phosphoserine occurs at positions 162, 163, and 171. Pro residues predominate over residues 201-210 (TPTPVKPPRL).

The protein belongs to the CAVIN family. Component of the CAVIN complex composed of CAVIN1, CAVIN2, CAVIN3 and CAVIN4. Interacts with PRKCD and with phosphatidylserine. Phosphatidylserine may form a bridge between PKC and PKC-binding partners and stabilize the binding. Interacts with PER2. Interacts with CAVIN1 and EPS15L1. Interacts (via leucine-zipper domain) with CAV1 in a cholesterol-sensitive manner. In terms of processing, in vitro, phosphorylated by PRKCD.

Its subcellular location is the cytoplasm. The protein resides in the membrane. It is found in the caveola. The protein localises to the cytosol. In terms of biological role, regulates the traffic and/or budding of caveolae. Plays a role in caveola formation in a tissue-specific manner. Required for the formation of caveolae in smooth muscle but not in the lung and heart endothelial cells. Regulates the equilibrium between cell surface-associated and cell surface-dissociated caveolae by promoting the rapid release of caveolae from the cell surface. Plays a role in the regulation of the circadian clock. Modulates the period length and phase of circadian gene expression and also regulates expression and interaction of the core clock components PER1/2 and CRY1/2. This is Caveolae-associated protein 3 (CAVIN3) from Bos taurus (Bovine).